The sequence spans 396 residues: Arginine biosynthesis bifunctional protein ArgJ (396 aa).

Substrate is bound by residues T147, K173, T184, E270, N391, and S396. T184 (nucleophile) is an active-site residue.

Belongs to the ArgJ family. Heterotetramer of two alpha and two beta chains.

It localises to the cytoplasm. It carries out the reaction N(2)-acetyl-L-ornithine + L-glutamate = N-acetyl-L-glutamate + L-ornithine. The enzyme catalyses L-glutamate + acetyl-CoA = N-acetyl-L-glutamate + CoA + H(+). Its pathway is amino-acid biosynthesis; L-arginine biosynthesis; L-ornithine and N-acetyl-L-glutamate from L-glutamate and N(2)-acetyl-L-ornithine (cyclic): step 1/1. It participates in amino-acid biosynthesis; L-arginine biosynthesis; N(2)-acetyl-L-ornithine from L-glutamate: step 1/4. Catalyzes two activities which are involved in the cyclic version of arginine biosynthesis: the synthesis of N-acetylglutamate from glutamate and acetyl-CoA as the acetyl donor, and of ornithine by transacetylation between N(2)-acetylornithine and glutamate. This Lactococcus lactis subsp. lactis (strain IL1403) (Streptococcus lactis) protein is Arginine biosynthesis bifunctional protein ArgJ.